A 477-amino-acid polypeptide reads, in one-letter code: Spliceosome-associated protein CWC27 homolog (477 aa).

Positions 11–166 constitute a PPIase cyclophilin-type domain; sequence SNGKVLLKTT…NPHKIKCTEV (156 aa). Disordered regions lie at residues 203 to 355 and 401 to 477; these read LLSF…AENT and TQAI…KERR. The span at 208 to 218 shows a compositional bias: acidic residues; it reads EEAEEDEEEVN. Basic and acidic residues-rich tracts occupy residues 230 to 240 and 247 to 258; these read SSHDLLKDDPR and VEREKDSQSADS. The span at 259-279 shows a compositional bias: acidic residues; it reads DKDEDEMSDDDDEEEDDEMDS. Composition is skewed to basic and acidic residues over residues 280-299, 311-353, and 430-442; these read DEKH…DPSK, EERK…KEAE, and QFEE…KDAN. A coiled-coil region spans residues 308 to 381; it reads DEAEERKSSR…EEVRKKNTNK (74 aa).

The protein belongs to the cyclophilin-type PPIase family. As to quaternary structure, part of the activated spliceosome B/catalytic step 1 spliceosome, one of the forms of the spliceosome which has a well-formed active site but still cannot catalyze the branching reaction and is composed at least of 52 proteins, the U2, U5 and U6 snRNAs and the pre-mRNA. Recruited during early steps of activated spliceosome B maturation, it is probably one of the first proteins released from this complex as he matures to the spliceosome C complex. Component of the minor spliceosome, which splices U12-type introns.

It is found in the nucleus. In terms of biological role, as part of the spliceosome, plays a role in pre-mRNA splicing. Probable inactive PPIase with no peptidyl-prolyl cis-trans isomerase activity. The protein is Spliceosome-associated protein CWC27 homolog (cwc27) of Xenopus laevis (African clawed frog).